Reading from the N-terminus, the 159-residue chain is Late embryogenesis abundant protein 50 (159 aa).

SMP domains lie at 30-87 and 96-151; these read TTLT…RNQK and NLGD…YKLN.

The protein belongs to the LEA type SMP family.

The protein resides in the cytoplasm. It is found in the nucleus. Its function is as follows. LEA proteins are late embryonic proteins abundant in higher plant seed embryos. The function of those proteins is not known. This is Late embryogenesis abundant protein 50 from Arabidopsis thaliana (Mouse-ear cress).